The chain runs to 239 residues: Ras-like protein B (239 aa).

GTP-binding positions include 13–18 (GVGKTA), 29–35 (VETYDPT), 59–60 (AG), 139–142 (NKSD), and 169–171 (SAK). An Effector region motif is present at residues 32 to 40 (YDPTIEDSY). Residues 191–227 (RQQQQGGRAQDRRPTGLGPMRDRDAGPEYPKTFRPDR) are disordered. Residues 199–226 (AQDRRPTGLGPMRDRDAGPEYPKTFRPD) show a composition bias toward basic and acidic residues.

Belongs to the small GTPase superfamily. Ras family. In terms of assembly, interacts with mpkA.

The enzyme catalyses GTP + H2O = GDP + phosphate + H(+). In terms of biological role, ras-like protein involved in the activation of Ras protein signal transduction. Ras proteins bind GDP/GTP and possess intrinsic GTPase activity. Plays a role in hyphal morphology and conidiophore development. Required for full virulence. This is Ras-like protein B from Aspergillus fumigatus (strain ATCC MYA-4609 / CBS 101355 / FGSC A1100 / Af293) (Neosartorya fumigata).